The sequence spans 683 residues: DNA ligase (683 aa).

NAD(+)-binding positions include 36–40, 85–86, and E119; these read DAEYD and SL. K121 functions as the N6-AMP-lysine intermediate in the catalytic mechanism. Residues R142, E179, K295, and K319 each coordinate NAD(+). Zn(2+)-binding residues include C413, C416, C431, and C437. A BRCT domain is found at 596–683; that stretch reads TETLPLSGQT…EHQAHLGGEA (88 aa).

This sequence belongs to the NAD-dependent DNA ligase family. LigA subfamily. Requires Mg(2+) as cofactor. Mn(2+) serves as cofactor.

It carries out the reaction NAD(+) + (deoxyribonucleotide)n-3'-hydroxyl + 5'-phospho-(deoxyribonucleotide)m = (deoxyribonucleotide)n+m + AMP + beta-nicotinamide D-nucleotide.. DNA ligase that catalyzes the formation of phosphodiester linkages between 5'-phosphoryl and 3'-hydroxyl groups in double-stranded DNA using NAD as a coenzyme and as the energy source for the reaction. It is essential for DNA replication and repair of damaged DNA. The sequence is that of DNA ligase from Hahella chejuensis (strain KCTC 2396).